The sequence spans 442 residues: Alpha-1,6-mannosyl-glycoprotein 2-beta-N-acetylglucosaminyltransferase (442 aa).

The Cytoplasmic portion of the chain corresponds to 1–9 (MRFRIYKRK). Residues 10–29 (VLILTLVVAACGFVLWSSNG) traverse the membrane as a helical; Signal-anchor for type II membrane protein segment. Residues 30 to 442 (RQRKSDALGP…ELCKSYRRLQ (413 aa)) are Lumenal-facing. Residues Asn64 and Asn81 are each glycosylated (N-linked (GlcNAc...) asparagine). Substrate contacts are provided by residues 118 to 122 (QVHNR) and Asp149. A disulfide bridge links Cys191 with Cys205. 224–228 (QTKHH) is a substrate binding site. A Mn(2+)-binding site is contributed by Asp256. Cys278 and Cys281 are disulfide-bonded. Arg293 contacts substrate. 3 disulfide bridges follow: Cys329-Cys352, Cys334-Cys435, and Cys373-Cys381. His369 is a Mn(2+) binding site.

The protein belongs to the glycosyltransferase 16 (GT16) protein family. In terms of assembly, homodimer. Mn(2+) is required as a cofactor. As to expression, detected in liver, lung, testis, kidney, brain, spleen, thymus, uterus and intestine.

It is found in the golgi apparatus membrane. It carries out the reaction an N(4)-{beta-D-GlcNAc-(1-&gt;2)-alpha-D-Man-(1-&gt;3)-[alpha-D-Man-(1-&gt;6)]-beta-D-Man-(1-&gt;4)-beta-D-GlcNAc-(1-&gt;4)-beta-D-GlcNAc}-L-asparaginyl-[protein] + UDP-N-acetyl-alpha-D-glucosamine = N(4)-{beta-D-GlcNAc-(1-&gt;2)-alpha-D-Man-(1-&gt;3)-[beta-D-GlcNAc-(1-&gt;2)-alpha-D-Man-(1-&gt;6)]-beta-D-Man-(1-&gt;4)-beta-D-GlcNAc-(1-&gt;4)-beta-D-GlcNAc}-L-asparaginyl-[protein] + UDP + H(+). The protein operates within protein modification; protein glycosylation. In terms of biological role, plays an essential role in protein N-glycosylation. Catalyzes the transfer of N-acetylglucosamine (GlcNAc) onto the free terminal mannose moiety in the core structure of the nascent N-linked glycan chain, giving rise to the second branch in complex glycans. The chain is Alpha-1,6-mannosyl-glycoprotein 2-beta-N-acetylglucosaminyltransferase (Mgat2) from Mus musculus (Mouse).